The sequence spans 237 residues: CDP-diacylglycerol--serine O-phosphatidyltransferase (237 aa).

The next 8 membrane-spanning stretches (helical) occupy residues 3-23 (INPLYLFPNLFTASSIFLGMM), 25-45 (IFYASSYQFVMACWLVVASLI), 73-93 (VIAFGVAPSLIAYFYVGYNFG), 95-115 (IGMAVSALFVIFGAIRLARFN), 124-144 (YSFIGIPIPAAAVLVVLCVLL), 150-170 (FLEGNTEKLFLSFIVLLGVLM), 184-204 (WNLKLFILVLIFLSLVFVRPL), and 207-227 (LSVFMGLYLIYGIIRWLFLMV).

The protein belongs to the CDP-alcohol phosphatidyltransferase class-I family.

The protein resides in the cell membrane. It carries out the reaction a CDP-1,2-diacyl-sn-glycerol + L-serine = a 1,2-diacyl-sn-glycero-3-phospho-L-serine + CMP + H(+). This chain is CDP-diacylglycerol--serine O-phosphatidyltransferase (pssA), found in Helicobacter pylori (strain ATCC 700392 / 26695) (Campylobacter pylori).